The primary structure comprises 260 residues: MDSPLSDGSRPPQQQNLHPLADYQFSAEEVKALRECNTESFLQRSLPFGTGLGLLAYFGVKNGYLQGNGKYGAVPKVVMGVILGYFVGKFSYQQKCAEKIMRLPNSRLGEVLRQRRQGGGVINTISPDESLTRAFTLAPFSPSSADVYTDEGLNPSRSTALNLDTESRPTLAGLDDIYRPSLDSSGQMMDTELPLEPAKPGQTYEDLRKKNREGYATHQQSPYSKPYEPQAPVRQRLVEPAPEAATGRPNKNKYGDSWQD.

An OCIA domain is found at 1-110; that stretch reads MDSPLSDGSR…MRLPNSRLGE (110 aa). Residues 146–260 are disordered; that stretch reads DVYTDEGLNP…KNKYGDSWQD (115 aa). Polar residues predominate over residues 155–164; it reads PSRSTALNLD. The segment covering 205–215 has biased composition (basic and acidic residues); that stretch reads EDLRKKNREGY.

The protein belongs to the OCIAD1 family.

The polypeptide is OCIA domain-containing protein 1 (Drosophila pseudoobscura pseudoobscura (Fruit fly)).